The sequence spans 216 residues: NADH-quinone oxidoreductase subunit C (216 aa).

Belongs to the complex I 30 kDa subunit family. In terms of assembly, NDH-1 is composed of 14 different subunits. Subunits NuoB, C, D, E, F, and G constitute the peripheral sector of the complex.

Its subcellular location is the cell inner membrane. It catalyses the reaction a quinone + NADH + 5 H(+)(in) = a quinol + NAD(+) + 4 H(+)(out). In terms of biological role, NDH-1 shuttles electrons from NADH, via FMN and iron-sulfur (Fe-S) centers, to quinones in the respiratory chain. The immediate electron acceptor for the enzyme in this species is believed to be ubiquinone. Couples the redox reaction to proton translocation (for every two electrons transferred, four hydrogen ions are translocated across the cytoplasmic membrane), and thus conserves the redox energy in a proton gradient. In Francisella tularensis subsp. holarctica (strain OSU18), this protein is NADH-quinone oxidoreductase subunit C.